A 373-amino-acid chain; its full sequence is Dual-specificity RNA methyltransferase RlmN (373 aa).

The active-site Proton acceptor is E94. Positions 100-339 (EDDRATLCVS…VIVRKTRGDD (240 aa)) constitute a Radical SAM core domain. C107 and C344 are disulfide-bonded. Positions 114, 118, and 121 each coordinate [4Fe-4S] cluster. S-adenosyl-L-methionine contacts are provided by residues 168 to 169 (GE), S200, 222 to 224 (SIH), and N301. Residue C344 is the S-methylcysteine intermediate of the active site.

It belongs to the radical SAM superfamily. RlmN family. [4Fe-4S] cluster is required as a cofactor.

The protein localises to the cytoplasm. The enzyme catalyses adenosine(2503) in 23S rRNA + 2 reduced [2Fe-2S]-[ferredoxin] + 2 S-adenosyl-L-methionine = 2-methyladenosine(2503) in 23S rRNA + 5'-deoxyadenosine + L-methionine + 2 oxidized [2Fe-2S]-[ferredoxin] + S-adenosyl-L-homocysteine. The catalysed reaction is adenosine(37) in tRNA + 2 reduced [2Fe-2S]-[ferredoxin] + 2 S-adenosyl-L-methionine = 2-methyladenosine(37) in tRNA + 5'-deoxyadenosine + L-methionine + 2 oxidized [2Fe-2S]-[ferredoxin] + S-adenosyl-L-homocysteine. Its function is as follows. Specifically methylates position 2 of adenine 2503 in 23S rRNA and position 2 of adenine 37 in tRNAs. m2A2503 modification seems to play a crucial role in the proofreading step occurring at the peptidyl transferase center and thus would serve to optimize ribosomal fidelity. The polypeptide is Dual-specificity RNA methyltransferase RlmN (Shewanella pealeana (strain ATCC 700345 / ANG-SQ1)).